A 361-amino-acid polypeptide reads, in one-letter code: Mitogen-activated protein kinase 1 (361 aa).

Residues 28 to 316 (YINLAYIGEG…VEAALAHPYL (289 aa)) form the Protein kinase domain. ATP is bound by residues 34 to 42 (IGEGAYGMV) and K57. The Proton acceptor role is filled by D152. Residue T188 is modified to Phosphothreonine. A TXY motif is present at residues 188 to 190 (TEY). Position 190 is a phosphotyrosine (Y190).

It belongs to the protein kinase superfamily. CMGC Ser/Thr protein kinase family. MAP kinase subfamily. Interacts with CDK2AP2. Mg(2+) serves as cofactor. Dually phosphorylated on Thr-188 and Tyr-190, which activates the enzyme. Expressed in the central nervous system, kidney, liver, intestine and the hematopoietic system. Also found in heart, muscle, pancreas and lung.

The protein resides in the cytoplasm. The protein localises to the cytoskeleton. It is found in the microtubule organizing center. Its subcellular location is the centrosome. It localises to the spindle. It carries out the reaction L-seryl-[protein] + ATP = O-phospho-L-seryl-[protein] + ADP + H(+). The catalysed reaction is L-threonyl-[protein] + ATP = O-phospho-L-threonyl-[protein] + ADP + H(+). Its activity is regulated as follows. Activated by tyrosine phosphorylation during the M phase of the meiotic cell cycle. Dephosphorylated and inactivated by DUSP1. Functionally, serine/threonine kinase which acts as an essential component of the MAP kinase signal transduction pathway. Plays an important role in the MAPK/ERK cascade. Depending on the cellular context, this cascade mediates diverse biological functions such as cell growth, adhesion, survival and differentiation through the regulation of transcription, translation, cytoskeletal rearrangements. The MAPK/ERK cascade also plays a role in initiation and regulation of meiosis, mitosis, and postmitotic functions in differentiated cells by phosphorylating a number of transcription factors. Many of the substrates are localized in the nucleus, and seem to participate in the regulation of transcription upon stimulation. However, other substrates are found in the cytosol as well as in other cellular organelles, and those are responsible for processes such as translation, mitosis and apoptosis. Moreover, the MAPK/ERK cascade is also involved in the regulation of the endosomal dynamics, including lysosome processing and endosome cycling through the perinuclear recycling compartment (PNRC); as well as in the fragmentation of the Golgi apparatus during mitosis. Phosphorylates microtubule-associated protein 2 (MAP2), myelin basic protein (MBP) and Elk-1. Phosphorylates dual specificity protein phosphatase 1 (DUSP1) during meiosis, increasing its stability. Activated by M phase promoting factor (MPF). Plays a role in the spindle assembly checkpoint. The chain is Mitogen-activated protein kinase 1 (mapk1) from Xenopus laevis (African clawed frog).